A 709-amino-acid polypeptide reads, in one-letter code: D-(-)-3-hydroxybutyrate oligomer hydrolase (709 aa).

Positions 1 to 26 (MTVFKTAPLLIAALAASSCGGGGSGA) are cleaved as a signal peptide. The segment at 58–77 (GLGRSGLQDDSPPGYAGSQP) is disordered. Ser305 (charge relay system) is an active-site residue.

Belongs to the D-(-)-3-hydroxybutyrate oligomer hydrolase family.

Its subcellular location is the secreted. It carries out the reaction (3R)-hydroxybutanoate dimer + H2O = 2 (R)-3-hydroxybutanoate + H(+). It participates in lipid metabolism; butanoate metabolism. Functionally, participates in the degradation of poly-3-hydroxybutyrate (PHB). It works downstream of poly(3-hydroxybutyrate) depolymerase, hydrolyzing D(-)-3-hydroxybutyrate oligomers of various length (3HB-oligomers) into 3HB-monomers. This is D-(-)-3-hydroxybutyrate oligomer hydrolase from Paracidovorax citrulli (strain AAC00-1) (Acidovorax citrulli).